The primary structure comprises 470 residues: ATP synthase subunit beta (470 aa).

Position 148–155 (148–155) interacts with ATP; the sequence is GGAGVGKT.

This sequence belongs to the ATPase alpha/beta chains family. F-type ATPases have 2 components, CF(1) - the catalytic core - and CF(0) - the membrane proton channel. CF(1) has five subunits: alpha(3), beta(3), gamma(1), delta(1), epsilon(1). CF(0) has three main subunits: a(1), b(2) and c(9-12). The alpha and beta chains form an alternating ring which encloses part of the gamma chain. CF(1) is attached to CF(0) by a central stalk formed by the gamma and epsilon chains, while a peripheral stalk is formed by the delta and b chains.

It is found in the cell inner membrane. It catalyses the reaction ATP + H2O + 4 H(+)(in) = ADP + phosphate + 5 H(+)(out). Functionally, produces ATP from ADP in the presence of a proton gradient across the membrane. The catalytic sites are hosted primarily by the beta subunits. This is ATP synthase subunit beta from Saccharophagus degradans (strain 2-40 / ATCC 43961 / DSM 17024).